Here is a 156-residue protein sequence, read N- to C-terminus: Transcription elongation factor GreA (156 aa).

A coiled-coil region spans residues 45–66 (NAEYHSAKEKQSFIEGRIKELE).

This sequence belongs to the GreA/GreB family.

Necessary for efficient RNA polymerase transcription elongation past template-encoded arresting sites. The arresting sites in DNA have the property of trapping a certain fraction of elongating RNA polymerases that pass through, resulting in locked ternary complexes. Cleavage of the nascent transcript by cleavage factors such as GreA or GreB allows the resumption of elongation from the new 3'terminus. GreA releases sequences of 2 to 3 nucleotides. The sequence is that of Transcription elongation factor GreA from Jannaschia sp. (strain CCS1).